The primary structure comprises 379 residues: MVSKPHGGKLIRRIAAPRTRERILSEQHEYPKVQIDHGRAIDLENIAHGVYSPLKGFLTREDFESVLDHMRLSDDTPWTIPIVLDVEKPEFEEGDAILLYHKETPIARMHVEDIYTYEKEEFALKVFKTKDANHPGVAKVYSMGKYLVGGEIELLNELPNPFAKYTLRPIETRVLFKEKGWKTVVAFQTRNVPHLGHEYVQKAALTFVDGLFINPVLGRKKRGDYKDEVIIKAYEVLFEHYYPKDVAVLATVRYEMRYAGPREAIHHAIMRKNFGATHFIVGRDHAGVGNYYGPYEAWDLFDEFPDLGITPMFIREAFYCKKCGGMVNEKICPHDEKYHVRISGTKLRNMIMRGEKPPEYMMRPEVYEVIRSFDNPFVE.

The protein belongs to the sulfate adenylyltransferase family.

The catalysed reaction is sulfate + ATP + H(+) = adenosine 5'-phosphosulfate + diphosphate. The protein operates within sulfur metabolism; hydrogen sulfide biosynthesis; sulfite from sulfate: step 1/3. This chain is Sulfate adenylyltransferase (sat), found in Pyrococcus abyssi (strain GE5 / Orsay).